The sequence spans 209 residues: Octanoyltransferase (209 aa).

The BPL/LPL catalytic domain occupies 29 to 209 (GSGDELVWML…KKSFVKIFGE (181 aa)). Residues 68-75 (RGGKYTYH), 141-143 (AIG), and 154-156 (GIA) contribute to the substrate site. Residue C172 is the Acyl-thioester intermediate of the active site.

The protein belongs to the LipB family.

Its subcellular location is the cytoplasm. It catalyses the reaction octanoyl-[ACP] + L-lysyl-[protein] = N(6)-octanoyl-L-lysyl-[protein] + holo-[ACP] + H(+). The protein operates within protein modification; protein lipoylation via endogenous pathway; protein N(6)-(lipoyl)lysine from octanoyl-[acyl-carrier-protein]: step 1/2. Its function is as follows. Catalyzes the transfer of endogenously produced octanoic acid from octanoyl-acyl-carrier-protein onto the lipoyl domains of lipoate-dependent enzymes. Lipoyl-ACP can also act as a substrate although octanoyl-ACP is likely to be the physiological substrate. In Neorickettsia sennetsu (strain ATCC VR-367 / Miyayama) (Ehrlichia sennetsu), this protein is Octanoyltransferase.